An 888-amino-acid chain; its full sequence is Valine--tRNA ligase (888 aa).

A 'HIGH' region motif is present at residues 43-53 (PFTSGTLHLGH). Residues 534-538 (KMSKS) carry the 'KMSKS' region motif. Lysine 537 contacts ATP.

This sequence belongs to the class-I aminoacyl-tRNA synthetase family. ValS type 2 subfamily.

It is found in the cytoplasm. The catalysed reaction is tRNA(Val) + L-valine + ATP = L-valyl-tRNA(Val) + AMP + diphosphate. Its function is as follows. Catalyzes the attachment of valine to tRNA(Val). As ValRS can inadvertently accommodate and process structurally similar amino acids such as threonine, to avoid such errors, it has a 'posttransfer' editing activity that hydrolyzes mischarged Thr-tRNA(Val) in a tRNA-dependent manner. The protein is Valine--tRNA ligase of Thermococcus kodakarensis (strain ATCC BAA-918 / JCM 12380 / KOD1) (Pyrococcus kodakaraensis (strain KOD1)).